We begin with the raw amino-acid sequence, 308 residues long: tRNA dimethylallyltransferase 1 (308 aa).

An ATP-binding site is contributed by 9–16 (GPTGVGKT). Substrate is bound at residue 11-16 (TGVGKT). The interval 34-37 (DSRQ) is interaction with substrate tRNA.

It belongs to the IPP transferase family. In terms of assembly, monomer. The cofactor is Mg(2+).

The enzyme catalyses adenosine(37) in tRNA + dimethylallyl diphosphate = N(6)-dimethylallyladenosine(37) in tRNA + diphosphate. Functionally, catalyzes the transfer of a dimethylallyl group onto the adenine at position 37 in tRNAs that read codons beginning with uridine, leading to the formation of N6-(dimethylallyl)adenosine (i(6)A). The protein is tRNA dimethylallyltransferase 1 of Bacteroides thetaiotaomicron (strain ATCC 29148 / DSM 2079 / JCM 5827 / CCUG 10774 / NCTC 10582 / VPI-5482 / E50).